The sequence spans 234 residues: MLSSAKHNKINNHSAFSISSSSSSLSTSSSLGHNKSQVTMEEVWKEINLGSLHYHRQLNIGHEPMLKNQNPNNSIFQDFLNMPLNQPPPPPPPPSSSTIVTALYGSLPLPPPATVLSLNSGVGFEFLDTTENLLASNPRSFEESAKFGCLGKKRGQDSDDTRGDRRYKRMIKNRESAARSRARKQAYTNELELEIAHLQTENARLKIQQEQLKIAEATQNQVKKTLQRSSTAPF.

The Nuclear localization signal signature appears at 152–159; sequence KKRGQDSD. The bZIP domain occupies 163 to 213; that stretch reads GDRRYKRMIKNRESAARSRARKQAYTNELELEIAHLQTENARLKIQQEQLK. Residues 165–184 are basic motif; the sequence is RRYKRMIKNRESAARSRARK. Residues 191 to 212 form a leucine-zipper region; the sequence is LELEIAHLQTENARLKIQQEQL. Position 231 is a phosphothreonine (threonine 231).

Belongs to the bZIP family. In terms of assembly, self-interacts. Interacts with FT and FD/BZIP14. Interacts with CPK33. Post-translationally, phosphorylated. In terms of tissue distribution, expressed on the flanks of the shoot apex.

It localises to the nucleus. In terms of biological role, transcription factor required for the transition to flowering promoted by FT. In Arabidopsis thaliana (Mouse-ear cress), this protein is bZIP transcription factor 27.